The chain runs to 821 residues: Glycerol-3-phosphate acyltransferase (821 aa).

Positions 310 to 315 (CHRSHM) match the HXXXXD motif motif.

Belongs to the GPAT/DAPAT family.

Its subcellular location is the cell membrane. It catalyses the reaction sn-glycerol 3-phosphate + an acyl-CoA = a 1-acyl-sn-glycero-3-phosphate + CoA. Its pathway is phospholipid metabolism; CDP-diacylglycerol biosynthesis; CDP-diacylglycerol from sn-glycerol 3-phosphate: step 1/3. The sequence is that of Glycerol-3-phosphate acyltransferase from Baumannia cicadellinicola subsp. Homalodisca coagulata.